The sequence spans 360 residues: Peptide chain release factor 1 (360 aa).

Gln237 carries the post-translational modification N5-methylglutamine.

This sequence belongs to the prokaryotic/mitochondrial release factor family. Methylated by PrmC. Methylation increases the termination efficiency of RF1.

It localises to the cytoplasm. Functionally, peptide chain release factor 1 directs the termination of translation in response to the peptide chain termination codons UAG and UAA. This Ectopseudomonas mendocina (strain ymp) (Pseudomonas mendocina) protein is Peptide chain release factor 1.